A 196-amino-acid chain; its full sequence is Putative HTH-type transcriptional regulator protein PtxE (196 aa).

Residues 1 to 59 (MLNPVWLKSLVAIVQTGSFQSAARALGLAQPTVSQHLQKLEEQVGVTLVQRSRSGCQPT) enclose the HTH lysR-type domain. The segment at residues 19 to 38 (FQSAARALGLAQPTVSQHLQ) is a DNA-binding region (H-T-H motif).

The protein belongs to the LysR transcriptional regulatory family.

This chain is Putative HTH-type transcriptional regulator protein PtxE (ptxE), found in Stutzerimonas stutzeri (Pseudomonas stutzeri).